The sequence spans 308 residues: Methionine synthase (308 aa).

Zn(2+) is bound by residues His192, Cys194, Glu215, and Cys282.

It belongs to the archaeal MetE family. Requires Zn(2+) as cofactor.

The protein operates within amino-acid biosynthesis; L-methionine biosynthesis via de novo pathway. Catalyzes the transfer of a methyl group to L-homocysteine resulting in methionine formation. Can use methylcobalamin and methylcobinamide as methyl donors, but methylcobalamin is not considered to be the physiological substrate. This chain is Methionine synthase, found in Methanocaldococcus jannaschii (strain ATCC 43067 / DSM 2661 / JAL-1 / JCM 10045 / NBRC 100440) (Methanococcus jannaschii).